The primary structure comprises 390 residues: 2-deoxy-scyllo-inosose synthase (390 aa).

NAD(+) contacts are provided by residues D42, 73 to 76, 105 to 109, 129 to 130, 140 to 142, and 151 to 152; these read EQNK, GVTGN, TT, SLK, and KN. Residue K142 is part of the active site. Co(2+) is bound at residue E184. Residue E244 is part of the active site. Positions 247 and 263 each coordinate Co(2+). Residues 371–390 are disordered; it reads PPRPAAARTDDAATVLGGAG.

It belongs to the sugar phosphate cyclases superfamily. DOI synthase family. NAD(+) is required as a cofactor. The cofactor is Co(2+).

The enzyme catalyses D-glucose 6-phosphate = 2-deoxy-L-scyllo-inosose + phosphate. It functions in the pathway metabolic intermediate biosynthesis; 2-deoxystreptamine biosynthesis; 2-deoxystreptamine from D-glucose 6-phosphate: step 1/4. It participates in antibiotic biosynthesis; kanamycin biosynthesis. Catalyzes the intramolecular carbocycle formation from D-glucose-6-phosphate to 2-deoxy-scyllo-inosose (DOI). In Streptomyces kanamyceticus, this protein is 2-deoxy-scyllo-inosose synthase (kanC).